The following is a 133-amino-acid chain: Transmembrane protein 60 (133 aa).

4 helical membrane-spanning segments follow: residues 5–25 (LAQR…MLVL), 35–55 (WFLI…MLIV), 78–98 (AWYL…CAKL), and 110–130 (FIPL…NVFF).

The protein resides in the membrane. The sequence is that of Transmembrane protein 60 (Tmem60) from Mus musculus (Mouse).